The chain runs to 287 residues: Formamidopyrimidine-DNA glycosylase (287 aa).

The active-site Schiff-base intermediate with DNA is Pro2. Glu3 acts as the Proton donor in catalysis. Lys60 acts as the Proton donor; for beta-elimination activity in catalysis. DNA is bound by residues His100 and Arg119. Residues 249 to 283 (QVYGREGEPCRHCGTVIAKIKLGGRSAHFCPQCQP) form an FPG-type zinc finger. The active-site Proton donor; for delta-elimination activity is the Arg273.

Belongs to the FPG family. Monomer. Requires Zn(2+) as cofactor.

It carries out the reaction Hydrolysis of DNA containing ring-opened 7-methylguanine residues, releasing 2,6-diamino-4-hydroxy-5-(N-methyl)formamidopyrimidine.. The enzyme catalyses 2'-deoxyribonucleotide-(2'-deoxyribose 5'-phosphate)-2'-deoxyribonucleotide-DNA = a 3'-end 2'-deoxyribonucleotide-(2,3-dehydro-2,3-deoxyribose 5'-phosphate)-DNA + a 5'-end 5'-phospho-2'-deoxyribonucleoside-DNA + H(+). Its function is as follows. Involved in base excision repair of DNA damaged by oxidation or by mutagenic agents. Acts as a DNA glycosylase that recognizes and removes damaged bases. Has a preference for oxidized purines, such as 7,8-dihydro-8-oxoguanine (8-oxoG). Has AP (apurinic/apyrimidinic) lyase activity and introduces nicks in the DNA strand. Cleaves the DNA backbone by beta-delta elimination to generate a single-strand break at the site of the removed base with both 3'- and 5'-phosphates. This is Formamidopyrimidine-DNA glycosylase (mutM) from Synechocystis sp. (strain ATCC 27184 / PCC 6803 / Kazusa).